Reading from the N-terminus, the 485-residue chain is Ribosomal protein uS12 methylthiotransferase RimO (485 aa).

The MTTase N-terminal domain occupies 14–124; it reads PKVGFISLGC…VMAHVRELLP (111 aa). Positions 23, 59, 88, 167, 171, and 174 each coordinate [4Fe-4S] cluster. Positions 153–389 constitute a Radical SAM core domain; it reads LTPRHYAYVK…MEVAQRISRE (237 aa). Positions 392–468 constitute a TRAM domain; it reads AEKVGRVLDV…EYDLYGEVIH (77 aa).

This sequence belongs to the methylthiotransferase family. RimO subfamily. Requires [4Fe-4S] cluster as cofactor.

It is found in the cytoplasm. The catalysed reaction is L-aspartate(89)-[ribosomal protein uS12]-hydrogen + (sulfur carrier)-SH + AH2 + 2 S-adenosyl-L-methionine = 3-methylsulfanyl-L-aspartate(89)-[ribosomal protein uS12]-hydrogen + (sulfur carrier)-H + 5'-deoxyadenosine + L-methionine + A + S-adenosyl-L-homocysteine + 2 H(+). Catalyzes the methylthiolation of an aspartic acid residue of ribosomal protein uS12. This chain is Ribosomal protein uS12 methylthiotransferase RimO, found in Deinococcus geothermalis (strain DSM 11300 / CIP 105573 / AG-3a).